Reading from the N-terminus, the 969-residue chain is Exoribonuclease II, mitochondrial (969 aa).

The N-terminal 41 residues, Met1–Lys41, are a transit peptide targeting the mitochondrion. Basic residues predominate over residues Arg28 to Gln38. The tract at residues Arg28 to Gln54 is disordered. The span at Ala40–Asp51 shows a compositional bias: basic and acidic residues. Residues Arg522–Gln853 form the RNB domain.

It belongs to the RNR ribonuclease family. MSU1 and SUV3 are the two components of the mitochondrial degradosome (mtEXO).

It is found in the mitochondrion matrix. The catalysed reaction is Exonucleolytic cleavage in the 3'- to 5'-direction to yield nucleoside 5'-phosphates.. In terms of biological role, essential for mitochondrial biogenesis. Functionally, required for intron-independent turnover and processing of mitochondrial RNA. Participates in 3' mtRNA processing where it hydrolyzes single-stranded RNA or partially double-stranded RNA with 3' single-stranded tails. This is Exoribonuclease II, mitochondrial (DSS1) from Saccharomyces cerevisiae (strain ATCC 204508 / S288c) (Baker's yeast).